The sequence spans 353 residues: 4-hydroxy-2-oxovalerate aldolase 2 (353 aa).

Residues 14–266 (VRMTDTSLRD…KTGIDFFDIA (253 aa)) enclose the Pyruvate carboxyltransferase domain. 22–23 (RD) serves as a coordination point for substrate. D23 contributes to the Mn(2+) binding site. The Proton acceptor role is filled by H26. S176 and H205 together coordinate substrate. Mn(2+)-binding residues include H205 and H207. Y296 provides a ligand contact to substrate.

Belongs to the 4-hydroxy-2-oxovalerate aldolase family.

The catalysed reaction is (S)-4-hydroxy-2-oxopentanoate = acetaldehyde + pyruvate. The sequence is that of 4-hydroxy-2-oxovalerate aldolase 2 from Mycobacterium sp. (strain JLS).